The primary structure comprises 437 residues: F-box only protein 9 (437 aa).

A disordered region spans residues 1–26; sequence MSAEAEEDCHSDADRVGDEGNESPAE. Ser-2 carries the post-translational modification N-acetylalanine. Basic and acidic residues predominate over residues 8–26; that stretch reads DCHSDADRVGDEGNESPAE. Residue His-10 is modified to Phosphoserine. A TPR repeat occupies 84-117; that stretch reads ARELFLQAVEEEQNGALYEAIKFYRRAMQLVPDI. Ser-126 is subject to Phosphoserine. Positions 175–226 constitute an F-box domain; it reads QTHISVLPMEVLMYIFRWVVSSDLDLRSLEQLSLVCRGFYICARDPEIWRLA.

In terms of assembly, part of the SCF (SKP1-CUL1-F-box) E3 ubiquitin-protein ligase complex SCF(FBXO9) composed of CUL1, SKP1, RBX1 and FBXO9. Interacts with TTI1 and TELO2; when TTI1 and TELO2 are phosphorylated by CK2.

The protein localises to the cytoplasm. Its pathway is protein modification; protein ubiquitination. Functionally, substrate recognition component of a SCF (SKP1-CUL1-F-box protein) E3 ubiquitin-protein ligase complex which mediates the ubiquitination and subsequent proteasomal degradation of target proteins and plays a role in several biological processes such as cell cycle, cell proliferation, or maintenance of chromosome stability. Ubiquitinates mTORC1-bound TTI1 and TELO2 when they are phosphorylated by CK2 following growth factor deprivation, leading to their degradation. In contrast, does not mediate ubiquitination of TTI1 and TELO2 when they are part of the mTORC2 complex. As a consequence, mTORC1 is inactivated to restrain cell growth and protein translation, while mTORC2 is the activated due to the relief of feedback inhibition by mTORC1. Plays a role in maintaining epithelial cell survival by regulating the turn-over of chromatin modulator PRMT4 through ubiquitination and degradation by the proteasomal pathway. Also regulates PPARgamma stability by facilitating PPARgamma/PPARG ubiquitination and thereby plays a role in adipocyte differentiation. In Mus musculus (Mouse), this protein is F-box only protein 9 (Fbxo9).